A 303-amino-acid polypeptide reads, in one-letter code: Coenzyme PQQ synthesis protein B (303 aa).

It belongs to the PqqB family.

It participates in cofactor biosynthesis; pyrroloquinoline quinone biosynthesis. Its function is as follows. May be involved in the transport of PQQ or its precursor to the periplasm. In Acinetobacter baumannii (strain AB0057), this protein is Coenzyme PQQ synthesis protein B.